Consider the following 356-residue polypeptide: Peptide chain release factor 1 (356 aa).

The residue at position 233 (glutamine 233) is an N5-methylglutamine.

The protein belongs to the prokaryotic/mitochondrial release factor family. Post-translationally, methylated by PrmC. Methylation increases the termination efficiency of RF1.

The protein resides in the cytoplasm. Its function is as follows. Peptide chain release factor 1 directs the termination of translation in response to the peptide chain termination codons UAG and UAA. This is Peptide chain release factor 1 from Bacillus licheniformis (strain ATCC 14580 / DSM 13 / JCM 2505 / CCUG 7422 / NBRC 12200 / NCIMB 9375 / NCTC 10341 / NRRL NRS-1264 / Gibson 46).